The primary structure comprises 81 residues: Putative defensin-like protein 56 (81 aa).

Positions 1 to 23 (MNITKAYVIFFLVVILTNSLSNS) are cleaved as a signal peptide. Cystine bridges form between cysteine 46–cysteine 80, cysteine 50–cysteine 73, cysteine 59–cysteine 78, and cysteine 63–cysteine 79.

It belongs to the DEFL family.

The protein resides in the secreted. This is Putative defensin-like protein 56 from Arabidopsis thaliana (Mouse-ear cress).